The following is a 225-amino-acid chain: Suppressor of cytokine signaling 3 (225 aa).

The tract at residues 22-33 is kinase inhibitory region (KIR); sequence LKTFSSKSEYQL. Residues 34–45 are extended SH2 subdomain (ESS); sequence VVNAVRKLQESG. An SH2 domain is found at 46–142; that stretch reads FYWSAVTGGE…APSFSLPPTE (97 aa). The disordered stretch occupies residues 141-160; sequence TEPSFEVQEQPPAQALPGGT. The SOCS box domain maps to 177-224; that stretch reads VLSRPLSSNVATLQHLCRKTVNGHLDSYEKVTQLPGPIREFLDQYDAP.

Interacts with multiple activated proteins of the tyrosine kinase signaling pathway including IGF1 receptor, insulin receptor and JAK2. Binding to JAK2 is mediated through the KIR and SH2 domains to a phosphorylated tyrosine residue within the JAK2 JH1 domain. Binds specific activated tyrosine residues of the leptin, EPO, IL12, GSCF and gp130 receptors. Interaction with CSNK1E stabilize SOCS3 protein. Component of the probable ECS(SOCS3) E3 ubiquitin-protein ligase complex which contains CUL5, RNF7/RBX2, Elongin BC complex and SOCS3. Interacts with CUL5, RNF7, ELOB and ELOC. Interacts with FGFR3. Interacts with INSR. Interacts with BCL10; this interaction may interfere with BCL10-binding with PELI2. Interacts with NOD2 (via CARD domain); the interaction promotes NOD2 degradation. Phosphorylated on tyrosine residues after stimulation by the cytokines, IL-2, EPO or IGF1.

It functions in the pathway protein modification; protein ubiquitination. In terms of biological role, SOCS family proteins form part of a classical negative feedback system that regulates cytokine signal transduction. SOCS3 is involved in negative regulation of cytokines that signal through the JAK/STAT pathway. Inhibits cytokine signal transduction by binding to tyrosine kinase receptors including IL6ST/gp130, LIF, erythropoietin, insulin, IL12, GCSF and leptin receptors. Binding to JAK2 inhibits its kinase activity and regulates IL6 signaling. Suppresses fetal liver erythropoiesis. Regulates onset and maintenance of allergic responses mediated by T-helper type 2 cells. Probable substrate recognition component of a SCF-like ECS (Elongin BC-CUL2/5-SOCS-box protein) E3 ubiquitin-protein ligase complex which mediates the ubiquitination and subsequent proteasomal degradation of target proteins. The polypeptide is Suppressor of cytokine signaling 3 (Rattus norvegicus (Rat)).